The primary structure comprises 65 residues: MEKLRKFFREVIAEAKKISWPSRKELLTSFGVVLVILAVTSVYFFVLDFIFSGVVSAIFKALGIG.

The Cytoplasmic segment spans residues 1–34 (MEKLRKFFREVIAEAKKISWPSRKELLTSFGVVL). A helical transmembrane segment spans residues 35 to 51 (VILAVTSVYFFVLDFIF). Residues 52–65 (SGVVSAIFKALGIG) are Extracellular-facing.

It belongs to the SecE/SEC61-gamma family. Component of the Sec protein translocase complex. Heterotrimer consisting of SecY, SecE and SecG subunits. The heterotrimers can form oligomers, although 1 heterotrimer is thought to be able to translocate proteins. Interacts with SecDF, and other proteins may be involved. The channel interacts with SecA via subunit SecY.

Its subcellular location is the cell inner membrane. Essential subunit of the protein translocation channel SecYEG. Clamps together the 2 halves of SecY. May contact the channel plug during translocation. The protein is Protein translocase subunit SecE of Thermotoga maritima (strain ATCC 43589 / DSM 3109 / JCM 10099 / NBRC 100826 / MSB8).